The primary structure comprises 232 residues: MSNVDHAEIAKFEALAHRWWDRESEFKPLHEINPLRVNWIEEHVRLAGKKVLDVGCGGGILSEAMALRGAAVTAIDMGEAPLAVARLHQLESGVEVDYRQSTVEALAAEMPGRFDVVTCLEMLEHVPDPASVIHACHTLVKPGGQVFFSTINRNPKAYLLAIIGAEYLLKLLPRGTHDFRKFIRPSELGAWCRASGLAIGDIVGLTYNPLTRHYKLGTDVDVNYMIQTWREE.

Positions 36, 55, 76, and 120 each coordinate S-adenosyl-L-methionine.

It belongs to the methyltransferase superfamily. UbiG/COQ3 family.

It carries out the reaction a 3-demethylubiquinol + S-adenosyl-L-methionine = a ubiquinol + S-adenosyl-L-homocysteine + H(+). The enzyme catalyses a 3-(all-trans-polyprenyl)benzene-1,2-diol + S-adenosyl-L-methionine = a 2-methoxy-6-(all-trans-polyprenyl)phenol + S-adenosyl-L-homocysteine + H(+). Its pathway is cofactor biosynthesis; ubiquinone biosynthesis. Its function is as follows. O-methyltransferase that catalyzes the 2 O-methylation steps in the ubiquinone biosynthetic pathway. The sequence is that of Ubiquinone biosynthesis O-methyltransferase from Azotobacter vinelandii (strain DJ / ATCC BAA-1303).